The chain runs to 449 residues: Xylose isomerase (449 aa).

Catalysis depends on residues His101 and Asp104. The Mg(2+) site is built by Glu232, Glu268, His271, Asp296, Asp307, Asp309, and Asp340.

It belongs to the xylose isomerase family. In terms of assembly, homotetramer. Requires Mg(2+) as cofactor.

It localises to the cytoplasm. The catalysed reaction is alpha-D-xylose = alpha-D-xylulofuranose. The protein is Xylose isomerase of Bifidobacterium longum (strain DJO10A).